We begin with the raw amino-acid sequence, 460 residues long: Chromosomal replication initiator protein DnaA (460 aa).

The segment at 1 to 84 (MAVSLWQQCI…RFDIGSRPSA (84 aa)) is domain I, interacts with DnaA modulators. The domain II stretch occupies residues 84-123 (AKKPEPAPVAAVRVPSPQTKASVGTAFNTTEPVANTNHRS). The domain III, AAA+ region stretch occupies residues 124 to 340 (NINPTYQFDN…GALNRVIANA (217 aa)). Positions 168, 170, 171, and 172 each coordinate ATP. Positions 341 to 460 (NFTGRPITID…YANLIRTLSS (120 aa)) are domain IV, binds dsDNA.

This sequence belongs to the DnaA family. Oligomerizes as a right-handed, spiral filament on DNA at oriC.

It localises to the cytoplasm. Functionally, plays an essential role in the initiation and regulation of chromosomal replication. ATP-DnaA binds to the origin of replication (oriC) to initiate formation of the DNA replication initiation complex once per cell cycle. Binds the DnaA box (a 9 base pair repeat at the origin) and separates the double-stranded (ds)DNA. Forms a right-handed helical filament on oriC DNA; dsDNA binds to the exterior of the filament while single-stranded (ss)DNA is stabiized in the filament's interior. The ATP-DnaA-oriC complex binds and stabilizes one strand of the AT-rich DNA unwinding element (DUE), permitting loading of DNA polymerase. After initiation quickly degrades to an ADP-DnaA complex that is not apt for DNA replication. Binds acidic phospholipids. The sequence is that of Chromosomal replication initiator protein DnaA from Shewanella oneidensis (strain ATCC 700550 / JCM 31522 / CIP 106686 / LMG 19005 / NCIMB 14063 / MR-1).